A 379-amino-acid polypeptide reads, in one-letter code: Subtilisin Carlsberg (379 aa).

Residues 1 to 29 (MMRKKSFWLGMLTAFMLVFTMAFSDSASA) form the signal peptide. A propeptide spanning residues 30 to 105 (AQPAKNVEKD…VEEDHVAHAL (76 aa)) is cleaved from the precursor. In terms of domain architecture, Inhibitor I9 spans 44–102 (FKSGVKTASVKKDIIKESGGKVDKQFRIINAAKAKLDKEALKEVKNDPDVAYVEEDHVA). Position 107 (glutamine 107) interacts with Ca(2+). The Peptidase S8 domain maps to 110-378 (PYGIPLIKAD…KGLINVEAAA (269 aa)). The Charge relay system role is filled by aspartate 137. Aspartate 146 contacts Ca(2+). Histidine 168 functions as the Charge relay system in the catalytic mechanism. Leucine 179, asparagine 181, threonine 183, valine 185, alanine 273, tyrosine 275, and valine 278 together coordinate Ca(2+). The Charge relay system role is filled by serine 325.

The protein belongs to the peptidase S8 family. Requires Ca(2+) as cofactor.

The protein resides in the secreted. The enzyme catalyses Hydrolysis of proteins with broad specificity for peptide bonds, and a preference for a large uncharged residue in P1. Hydrolyzes peptide amides.. Inhibited by p-chlorophenyl and 1-naphthyl boronic acid derivatives. Subtilisin is an extracellular alkaline serine protease, it catalyzes the hydrolysis of proteins and peptide amides. Shows high specificity for aromatic and hydrophobic amino acids in the P1 substrate position. May play an important role in the degradation of feather keratin. This Bacillus licheniformis protein is Subtilisin Carlsberg.